A 292-amino-acid polypeptide reads, in one-letter code: Ribosomal protein L11 methyltransferase (292 aa).

Threonine 144, glycine 165, aspartate 187, and asparagine 229 together coordinate S-adenosyl-L-methionine.

The protein belongs to the methyltransferase superfamily. PrmA family.

The protein resides in the cytoplasm. The enzyme catalyses L-lysyl-[protein] + 3 S-adenosyl-L-methionine = N(6),N(6),N(6)-trimethyl-L-lysyl-[protein] + 3 S-adenosyl-L-homocysteine + 3 H(+). Functionally, methylates ribosomal protein L11. This chain is Ribosomal protein L11 methyltransferase, found in Pseudomonas putida (strain GB-1).